The chain runs to 529 residues: uncharacterized protein (529 aa).

To M.jannaschii MJ1451.

This is an uncharacterized protein from Methanothermobacter thermautotrophicus (strain ATCC 29096 / DSM 1053 / JCM 10044 / NBRC 100330 / Delta H) (Methanobacterium thermoautotrophicum).